We begin with the raw amino-acid sequence, 390 residues long: ATP-sensitive inward rectifier potassium channel 11 (390 aa).

Over 1–65 (MLSRKGIIPE…LQDVFTTLVD (65 aa)) the chain is Cytoplasmic. 2 residues coordinate ATP: Asn-48 and Arg-50. The helical transmembrane segment at 66 to 92 (LKWPHTLLIFTMSFLCSWLLFAMVWWL) threads the bilayer. The Extracellular portion of the chain corresponds to 93–116 (IAFAHGDLAPGEGTTVPCVTSIHS). A disulfide bridge links Cys-110 with Cys-142. The discontinuously helical; Pore-forming intramembrane region spans 117–133 (FSSAFLFSIEVQVTIGF). 2 residues coordinate K(+): Thr-130 and Phe-133. The Selectivity filter motif lies at 130-135 (TIGFGG). The Extracellular portion of the chain corresponds to 134–142 (GGRMVTEEC). A helical membrane pass occupies residues 143–171 (PLAILILIVQNIVGLMINAIMLGCIFMKT). Over 172–390 (SQAHRRAETL…RFSISPDSLS (219 aa)) the chain is Cytoplasmic. Arg-176 contacts a 1,2-diacyl-sn-glycero-3-phospho-(1D-myo-inositol-4,5-bisphosphate). Residue Tyr-330 coordinates ATP. Residue Thr-341 is modified to Phosphothreonine; by MAPK1. Residue Ser-385 is modified to Phosphoserine; by MAPK1.

Belongs to the inward rectifier-type potassium channel (TC 1.A.2.1) family. KCNJ11 subfamily. As to quaternary structure, homotetramer; the homotetramer binds four ATP molecules (one ATP per subunit). Forms an heterooctamer with ABCC8/SUR1; one KCNJ11 homotetramer interacts with four ABCC8/SUR1 molecules. Interacts with ABCC9/SUR2. In terms of processing, phosphorylation by MAPK1 results in changes in channel gating that destabilize the closed states and reduce the ATP sensitivity.

The protein resides in the membrane. It carries out the reaction K(+)(in) = K(+)(out). Its activity is regulated as follows. KATP channels are regulated by cytoplasmic ATP/ADP ratios; ATP inhibits the channel by closing the pore, while ADP activates the channel. Activated by phosphatidylinositol 4,5-biphosphate (PtdIns(4,5)P2). Inward rectifier potassium channel that forms the pore of ATP-sensitive potassium channels (KATP), regulating potassium permeability as a function of cytoplasmic ATP and ADP concentrations in many different cells. Inward rectifier potassium channels are characterized by a greater tendency to allow potassium to flow into the cell rather than out of it. Their voltage dependence is regulated by the concentration of extracellular potassium; as external potassium is raised, the voltage range of the channel opening shifts to more positive voltages. The inward rectification is mainly due to the blockage of outward current by internal magnesium. Can be blocked by extracellular barium. In pancreatic cells, it forms KATP channels with ABCC8/SUR1. Can form cardiac and smooth muscle-type KATP channels with ABCC9. The polypeptide is ATP-sensitive inward rectifier potassium channel 11 (KCNJ11) (Cavia porcellus (Guinea pig)).